Consider the following 266-residue polypeptide: Glucagon-1 (266 aa).

Positions 1 to 20 (MKSTCYMIGILLMILQNTYQ) are cleaved as a signal peptide. 6 consecutive propeptides follow at residues 21–50 (SPVPETDANSRSVKAARNEAVDDSEQLKEV), 84–95 (SGELSRRNADYE), 136–140 (NAEFE), 175–178 (IRYS), 213–224 (NFSEVHSVEEMD), and 261–266 (DLLEEQ). Residues 23–32 (VPETDANSRS) are compositionally biased toward polar residues. Positions 23-44 (VPETDANSRSVKAARNEAVDDS) are disordered.

Belongs to the glucagon family.

The protein localises to the secreted. Promotes hydrolysis of glycogen and lipids, and raises the blood sugar level. The chain is Glucagon-1 (gcg1) from Xenopus laevis (African clawed frog).